We begin with the raw amino-acid sequence, 581 residues long: Bifunctional lycopene cyclase/phytoene synthase (581 aa).

The lycopene beta-cyclase stretch occupies residues 1 to 243; the sequence is MGFDYALVHL…IVFGQLAFDN (243 aa). Transmembrane regions (helical) follow at residues 3-23, 35-55, 65-85, 120-140, 152-172, 173-193, and 221-241; these read FDYA…LTLL, KVAF…SYLI, HVII…FFVV, LKRL…WFCV, ILIW…QFII, GLPF…LWIV, and IEEA…QLAF. The interval 250 to 581 is phytoene synthase; that stretch reads AFPHLFPDPS…RVLVAWRTLN (332 aa).

The protein in the N-terminal section; belongs to the lycopene beta-cyclase family. It in the C-terminal section; belongs to the phytoene/squalene synthase family.

The protein localises to the membrane. The catalysed reaction is all-trans-lycopene = gamma-carotene. The enzyme catalyses gamma-carotene = all-trans-beta-carotene. It carries out the reaction 2 (2E,6E,10E)-geranylgeranyl diphosphate = 15-cis-phytoene + 2 diphosphate. The protein operates within carotenoid biosynthesis; beta-carotene biosynthesis. Its pathway is carotenoid biosynthesis; phytoene biosynthesis; all-trans-phytoene from geranylgeranyl diphosphate: step 1/1. Its function is as follows. Bifunctional enzyme that catalyzes the reactions from geranylgeranyl diphosphate to phytoene (phytoene synthase) and lycopene to beta-carotene via the intermediate gamma-carotene (lycopene cyclase). The polypeptide is Bifunctional lycopene cyclase/phytoene synthase (Leptosphaeria maculans (strain JN3 / isolate v23.1.3 / race Av1-4-5-6-7-8) (Blackleg fungus)).